The primary structure comprises 452 residues: Tubulin alpha-8 chain (452 aa).

Residues glutamine 15, glutamate 74, serine 143, glycine 147, threonine 148, threonine 182, asparagine 209, and asparagine 231 each coordinate GTP. A Mg(2+)-binding site is contributed by glutamate 74. The active site involves glutamate 257.

It belongs to the tubulin family. In terms of assembly, dimer of alpha and beta chains. A typical microtubule is a hollow water-filled tube with an outer diameter of 25 nm and an inner diameter of 15 nM. Alpha-beta heterodimers associate head-to-tail to form protofilaments running lengthwise along the microtubule wall with the beta-tubulin subunit facing the microtubule plus end conferring a structural polarity. Microtubules usually have 13 protofilaments but different protofilament numbers can be found in some organisms and specialized cells. Requires Mg(2+) as cofactor.

The protein resides in the cytoplasm. It localises to the cytoskeleton. The enzyme catalyses GTP + H2O = GDP + phosphate + H(+). Its function is as follows. Tubulin is the major constituent of microtubules, a cylinder consisting of laterally associated linear protofilaments composed of alpha- and beta-tubulin heterodimers. Microtubules grow by the addition of GTP-tubulin dimers to the microtubule end, where a stabilizing cap forms. Below the cap, tubulin dimers are in GDP-bound state, owing to GTPase activity of alpha-tubulin. In Caenorhabditis elegans, this protein is Tubulin alpha-8 chain (tba-8).